The primary structure comprises 195 residues: ATP-dependent Clp protease proteolytic subunit (195 aa).

Catalysis depends on Ser-99, which acts as the Nucleophile. His-124 is an active-site residue.

Belongs to the peptidase S14 family. As to quaternary structure, fourteen ClpP subunits assemble into 2 heptameric rings which stack back to back to give a disk-like structure with a central cavity, resembling the structure of eukaryotic proteasomes.

It localises to the cytoplasm. It carries out the reaction Hydrolysis of proteins to small peptides in the presence of ATP and magnesium. alpha-casein is the usual test substrate. In the absence of ATP, only oligopeptides shorter than five residues are hydrolyzed (such as succinyl-Leu-Tyr-|-NHMec, and Leu-Tyr-Leu-|-Tyr-Trp, in which cleavage of the -Tyr-|-Leu- and -Tyr-|-Trp bonds also occurs).. Its function is as follows. Cleaves peptides in various proteins in a process that requires ATP hydrolysis. Has a chymotrypsin-like activity. Plays a major role in the degradation of misfolded proteins. In Coxiella burnetii (strain CbuG_Q212) (Coxiella burnetii (strain Q212)), this protein is ATP-dependent Clp protease proteolytic subunit.